The primary structure comprises 307 residues: High-affinity branched-chain amino acid transport system permease protein BraD (307 aa).

The next 10 membrane-spanning stretches (helical) occupy residues 21 to 41 (YALIAIGYTMVYGIIGMINFA), 45 to 65 (VYMIGSYIAFIAITLLAMMGL), 70 to 90 (LMMLAAFAASIIVTSAFGYSI), 104 to 124 (LIPLISAIGMSIFLQNAVMLS), 132 to 152 (IPTLLPGNFVFGESSMNGVVI), 154 to 174 (YMQILIFVVTFLVMFGLTLFI), 203 to 223 (IIALTFVIGAALAAVAAVLLG), 224 to 244 (MQYGVINPGIGFLAGIKAFTA), 245 to 265 (AVLGGIGSIPGAMLGGLLLGV), and 280 to 300 (DVVAFGLLILVLLFRPTGILG).

Belongs to the binding-protein-dependent transport system permease family. LivHM subfamily.

It localises to the cell inner membrane. Functionally, component of the high affinity leucine, isoleucine, valine, transport system (LIV-I), which is operative without Na(+) and is specific for alanine and threonine, in addition to branched-chain amino acids. The polypeptide is High-affinity branched-chain amino acid transport system permease protein BraD (braD) (Pseudomonas aeruginosa (strain ATCC 15692 / DSM 22644 / CIP 104116 / JCM 14847 / LMG 12228 / 1C / PRS 101 / PAO1)).